The primary structure comprises 179 residues: Large ribosomal subunit protein uL5 (179 aa).

This sequence belongs to the universal ribosomal protein uL5 family. Part of the 50S ribosomal subunit; part of the 5S rRNA/L5/L18/L25 subcomplex. Contacts the 5S rRNA and the P site tRNA. Forms a bridge to the 30S subunit in the 70S ribosome.

Its function is as follows. This is one of the proteins that bind and probably mediate the attachment of the 5S RNA into the large ribosomal subunit, where it forms part of the central protuberance. In the 70S ribosome it contacts protein S13 of the 30S subunit (bridge B1b), connecting the 2 subunits; this bridge is implicated in subunit movement. Contacts the P site tRNA; the 5S rRNA and some of its associated proteins might help stabilize positioning of ribosome-bound tRNAs. The protein is Large ribosomal subunit protein uL5 of Prochlorococcus marinus (strain MIT 9215).